A 397-amino-acid polypeptide reads, in one-letter code: ATP-dependent RNA helicase eIF4A (397 aa).

Positions Y23–Q51 match the Q motif motif. Residues I54–I224 enclose the Helicase ATP-binding domain. A67–T74 provides a ligand contact to ATP. The short motif at D172–D175 is the DEAD box element. Positions G235–F396 constitute a Helicase C-terminal domain.

The protein belongs to the DEAD box helicase family. eIF4A subfamily. In terms of assembly, component of the eIF4F complex, which composition varies with external and internal environmental conditions. It is composed of at least eIF4A, eIF4E and eIF4G.

The protein resides in the cytoplasm. The enzyme catalyses ATP + H2O = ADP + phosphate + H(+). Its function is as follows. ATP-dependent RNA helicase which is a subunit of the eIF4F complex involved in cap recognition and is required for mRNA binding to ribosome. In the current model of translation initiation, eIF4A unwinds RNA secondary structures in the 5'-UTR of mRNAs which is necessary to allow efficient binding of the small ribosomal subunit, and subsequent scanning for the initiator codon. The chain is ATP-dependent RNA helicase eIF4A (TIF1) from Debaryomyces hansenii (strain ATCC 36239 / CBS 767 / BCRC 21394 / JCM 1990 / NBRC 0083 / IGC 2968) (Yeast).